The primary structure comprises 403 residues: Tryptophan synthase beta chain (403 aa).

Lys-96 bears the N6-(pyridoxal phosphate)lysine mark.

This sequence belongs to the TrpB family. Tetramer of two alpha and two beta chains. It depends on pyridoxal 5'-phosphate as a cofactor.

It carries out the reaction (1S,2R)-1-C-(indol-3-yl)glycerol 3-phosphate + L-serine = D-glyceraldehyde 3-phosphate + L-tryptophan + H2O. The protein operates within amino-acid biosynthesis; L-tryptophan biosynthesis; L-tryptophan from chorismate: step 5/5. In terms of biological role, the beta subunit is responsible for the synthesis of L-tryptophan from indole and L-serine. This is Tryptophan synthase beta chain from Ralstonia nicotianae (strain ATCC BAA-1114 / GMI1000) (Ralstonia solanacearum).